Reading from the N-terminus, the 463-residue chain is Casein kinase 1 (463 aa).

One can recognise a Protein kinase domain in the interval 9–278 (FKLGRKIGSG…LKRLFRDLFI (270 aa)). ATP contacts are provided by residues 15-23 (IGSGSFGEL) and Lys-38. The active-site Proton acceptor is Asp-128. Over residues 296 to 306 (ESNRLRSSGRT) the composition is skewed to polar residues. Residues 296–448 (ESNRLRSSGR…TARNVHDDPT (153 aa)) are disordered. Positions 315–328 (ERTERAAARQDVPD) are enriched in basic and acidic residues. Composition is skewed to polar residues over residues 376–396 (TSSS…SRPS) and 404–440 (NRSN…TKTA).

It belongs to the protein kinase superfamily. CK1 Ser/Thr protein kinase family. Casein kinase I subfamily. In terms of assembly, monomer. In terms of processing, autophosphorylated. Expressed in leaves, stems, panicles and seeds. Expressed in root tissues and lamina joints.

It is found in the cytoplasm. The protein resides in the nucleus. The enzyme catalyses L-seryl-[protein] + ATP = O-phospho-L-seryl-[protein] + ADP + H(+). The catalysed reaction is L-threonyl-[protein] + ATP = O-phospho-L-threonyl-[protein] + ADP + H(+). With respect to regulation, inhibited by N-(2-aminoethyl)-5-chloroisoquinoline-8-sulfonamide (CKI-7). In terms of biological role, casein kinases are operationally defined by their preferential utilization of acidic proteins such as caseins as substrates. Can phosphorylate casein in vitro. Required for normal root development through modulation of cell elongation. Plants silencing CKI1 show abnormal root development, with reduced number of lateral and adventitious roots, and shortened primary roots as a result of reduced cell elongation. May be involved in abscisic acid (ABA) and brassinosteroid (BR) signaling pathways. Plays an important role in the adaptive growth and fitness under low temperature (LT) conditions. May confer tolerance to LT through an auxin-dependent process. This Oryza sativa subsp. japonica (Rice) protein is Casein kinase 1 (CKI1).